A 456-amino-acid polypeptide reads, in one-letter code: Cell adhesion molecule 1 (456 aa).

Residues 1–47 (MASAVLPSGSQCAAAAAVAAAAAPPGLRLRLLLLLLSAAALIPTGDG) form the signal peptide. Positions 48–142 (QNLFTKDVTV…PPQESYTTIT (95 aa)) constitute an Ig-like V-type domain. Over 48–388 (QNLFTKDVTV…EEGTIGAVDH (341 aa)) the chain is Extracellular. Cys-67 and Cys-127 are oxidised to a cystine. Residues Asn-70, Asn-104, Asn-116, and Asn-168 are each glycosylated (N-linked (GlcNAc...) asparagine). Ig-like C2-type domains follow at residues 147-241 (PRNL…RYLE) and 246-332 (PQVH…YMLY). Intrachain disulfides connect Cys-169/Cys-223 and Cys-270/Cys-316. Residues Asn-307 and Asn-311 are each glycosylated (N-linked (GlcNAc...) asparagine). The chain crosses the membrane as a helical span at residues 389 to 409 (AVIGGVVAVVVFAMLCLLIIL). The Cytoplasmic segment spans residues 410–456 (GRYFARHKGTYFTHEAKGADDAADADTAIINAEGGQNNSEEKKEYFI). A Phosphothreonine modification is found at Thr-436. Ser-448 carries the phosphoserine modification.

This sequence belongs to the nectin family. As to quaternary structure, homodimer (via Ig-like V-type domain). Interacts with FARP1. Interacts (via Ig-like V-type domain) with CRTAM (via Ig-like V-type domain); the interaction competes with CRTAM homodimerization and CADM1 homodimerization. Interacts (via C-terminus) with EPB41L3/DAL1. The interaction with EPB41L3/DAL1 may act to anchor CADM1 to the actin cytoskeleton. Interacts (via C-terminus) with MPP2 (via PDZ domain). Interacts (via C-terminus) with MPP3 (via PDZ domain); this interaction connects CADM1 with DLG1. Interacts (via C-terminus) with PALS2 (via PDZ domain). N-glycosylated. Post-translationally, glycosylation at Asn-70 and Asn-104 promotes adhesive binding and synapse induction. As to expression, expressed dominantly in epithelial cells but not expressed in fibroblast cells (at protein level). Expressed in the T-cell area of lymph nodes, specifically in CD8+ and CD4- CD8- dendritic cells (at protein level). Expressed in CD8+ dendritic cells in the spleen (at protein level). Expressed in CD103+ dendritic cells in the small intestine lamina propria and mesenteric lymph nodes (at protein level). Expressed in brain, lung, kidney, testis, heart, spleen and liver, but not expressed in skeletal muscle.

The protein resides in the cell membrane. The protein localises to the synaptic cell membrane. Its function is as follows. Mediates homophilic cell-cell adhesion in a Ca(2+)-independent manner. Also mediates heterophilic cell-cell adhesion with CADM3 and NECTIN3 in a Ca(2+)-independent manner. Interaction with CRTAM promotes natural killer (NK) cell cytotoxicity and interferon-gamma (IFN-gamma) secretion by CD8+ T-cells in vitro as well as NK cell-mediated rejection of tumors expressing CADM1 in vivo. In mast cells, may mediate attachment to and promote communication with nerves. CADM1, together with MITF, is essential for development and survival of mast cells in vivo. By interacting with CRTAM and thus promoting the adhesion between CD8+ T-cells and CD8+ dendritic cells, regulates the retention of activated CD8+ T-cell within the draining lymph node. Required for the intestinal retention of intraepithelial CD4+ CD8+ T-cells and, to a lesser extent, intraepithelial and lamina propria CD8+ T-cells and CD4+ T-cells. Interaction with CRTAM promotes the adhesion to gut-associated CD103+ dendritic cells, which may facilitate the expression of gut-homing and adhesion molecules on T-cells and the conversion of CD4+ T-cells into CD4+ CD8+ T-cells. Acts as a synaptic cell adhesion molecule and plays a role in the formation of dendritic spines and in synapse assembly. May be involved in neuronal migration, axon growth, pathfinding, and fasciculation on the axons of differentiating neurons. May play diverse roles in the spermatogenesis including in the adhesion of spermatocytes and spermatids to Sertoli cells and for their normal differentiation into mature spermatozoa. The chain is Cell adhesion molecule 1 from Mus musculus (Mouse).